Consider the following 544-residue polypeptide: Phenylalanine--tRNA ligase beta subunit (544 aa).

The 77-residue stretch at 270–346 folds into the B5 domain; the sequence is LEPKTRFLTK…KGYGYENIKV (77 aa). Mg(2+) contacts are provided by Asp-324, Asp-330, Glu-333, and Asp-334.

The protein belongs to the phenylalanyl-tRNA synthetase beta subunit family. Type 2 subfamily. As to quaternary structure, tetramer of two alpha and two beta subunits. Mg(2+) serves as cofactor.

The protein resides in the cytoplasm. The enzyme catalyses tRNA(Phe) + L-phenylalanine + ATP = L-phenylalanyl-tRNA(Phe) + AMP + diphosphate + H(+). In Methanosarcina barkeri (strain Fusaro / DSM 804), this protein is Phenylalanine--tRNA ligase beta subunit.